Consider the following 63-residue polypeptide: MGLKAKHKENLCSDSQRSKRLYVWIALAIVLSDFTSIFSHWIWGLLILILRTLMDLPTFVMNV.

A helical membrane pass occupies residues 21–43; it reads LYVWIALAIVLSDFTSIFSHWIW.

The protein belongs to the Leviviricetes lysis protein family.

The protein resides in the host cell inner membrane. The protein localises to the host cell outer membrane. Induces the formation of specific membrane adhesion sites between the inner and outer membranes, apparently leading to host cell lysis. Lysis may be performed via activation of host murein hydrolases. This Escherichia coli (Bacteriophage JP34) protein is Lysis protein.